The primary structure comprises 259 residues: 5'-nucleotidase SurE (259 aa).

Positions 8, 9, 39, and 95 each coordinate a divalent metal cation.

Belongs to the SurE nucleotidase family. It depends on a divalent metal cation as a cofactor.

It is found in the cytoplasm. It catalyses the reaction a ribonucleoside 5'-phosphate + H2O = a ribonucleoside + phosphate. Its function is as follows. Nucleotidase that shows phosphatase activity on nucleoside 5'-monophosphates. In Pseudothermotoga lettingae (strain ATCC BAA-301 / DSM 14385 / NBRC 107922 / TMO) (Thermotoga lettingae), this protein is 5'-nucleotidase SurE.